Consider the following 334-residue polypeptide: Dihydroorotate dehydrogenase (quinone) (334 aa).

Residues 59–63 (AGLDK) and Thr-83 contribute to the FMN site. Residue Lys-63 coordinates substrate. Residue 108-112 (NRMGF) participates in substrate binding. Residues Asn-136 and Asn-169 each contribute to the FMN site. Asn-169 contacts substrate. Ser-172 (nucleophile) is an active-site residue. A substrate-binding site is contributed by Asn-174. Residues Lys-214 and Thr-242 each contribute to the FMN site. Residue 243 to 244 (NT) coordinates substrate. FMN-binding positions include Gly-265, Gly-294, and 315 to 316 (YS).

The protein belongs to the dihydroorotate dehydrogenase family. Type 2 subfamily. As to quaternary structure, monomer. FMN is required as a cofactor.

The protein resides in the cell membrane. It catalyses the reaction (S)-dihydroorotate + a quinone = orotate + a quinol. The protein operates within pyrimidine metabolism; UMP biosynthesis via de novo pathway; orotate from (S)-dihydroorotate (quinone route): step 1/1. Its function is as follows. Catalyzes the conversion of dihydroorotate to orotate with quinone as electron acceptor. This chain is Dihydroorotate dehydrogenase (quinone), found in Acinetobacter baylyi (strain ATCC 33305 / BD413 / ADP1).